The following is a 141-amino-acid chain: Large ribosomal subunit protein uL16 (141 aa).

Over residues M1–M17 the composition is skewed to basic residues. Residues M1 to N29 form a disordered region.

This sequence belongs to the universal ribosomal protein uL16 family. Part of the 50S ribosomal subunit.

In terms of biological role, binds 23S rRNA and is also seen to make contacts with the A and possibly P site tRNAs. This is Large ribosomal subunit protein uL16 from Flavobacterium johnsoniae (strain ATCC 17061 / DSM 2064 / JCM 8514 / BCRC 14874 / CCUG 350202 / NBRC 14942 / NCIMB 11054 / UW101) (Cytophaga johnsonae).